The following is a 412-amino-acid chain: Putative competence-damage inducible protein (412 aa).

The protein belongs to the CinA family.

This is Putative competence-damage inducible protein from Bacillus cereus (strain ZK / E33L).